Consider the following 327-residue polypeptide: Sugar transporter ERD6-like 9 (327 aa).

8 consecutive transmembrane segments (helical) span residues 26–46, 68–88, 102–122, 125–145, 152–172, 180–200, 260–280, and 295–315; these read FLVF…VALG, VFGS…ATIA, VFCI…WLDL, FFVG…IAEI, GTFT…AYYL, IIAL…FFVP, LTIG…GLGY, and IGMT…LILV.

This sequence belongs to the major facilitator superfamily. Sugar transporter (TC 2.A.1.1) family.

The protein resides in the membrane. Its function is as follows. Sugar transporter. The chain is Sugar transporter ERD6-like 9 from Arabidopsis thaliana (Mouse-ear cress).